A 207-amino-acid polypeptide reads, in one-letter code: dITP/XTP pyrophosphatase (207 aa).

7–12 is a substrate binding site; sequence SNNAKK. Catalysis depends on Asp-72, which acts as the Proton acceptor. Residue Asp-72 coordinates Mg(2+). Residues Ser-73, 155–158, Lys-184, and 189–190 each bind substrate; these read FGYD and HR.

It belongs to the HAM1 NTPase family. In terms of assembly, homodimer. It depends on Mg(2+) as a cofactor.

It carries out the reaction XTP + H2O = XMP + diphosphate + H(+). The catalysed reaction is dITP + H2O = dIMP + diphosphate + H(+). The enzyme catalyses ITP + H2O = IMP + diphosphate + H(+). Pyrophosphatase that catalyzes the hydrolysis of nucleoside triphosphates to their monophosphate derivatives, with a high preference for the non-canonical purine nucleotides XTP (xanthosine triphosphate), dITP (deoxyinosine triphosphate) and ITP. Seems to function as a house-cleaning enzyme that removes non-canonical purine nucleotides from the nucleotide pool, thus preventing their incorporation into DNA/RNA and avoiding chromosomal lesions. This chain is dITP/XTP pyrophosphatase, found in Corynebacterium efficiens (strain DSM 44549 / YS-314 / AJ 12310 / JCM 11189 / NBRC 100395).